A 588-amino-acid polypeptide reads, in one-letter code: Succinate dehydrogenase flavoprotein subunit (588 aa).

Residues 14–19 (GAGGAG), 37–52 (SKVF…AQGG), and Asp221 contribute to the FAD site. His45 bears the Tele-8alpha-FAD histidine mark. Substrate contacts are provided by His242 and Thr254. Arg286 acts as the Proton acceptor in catalysis. Position 354 (His354) interacts with substrate. Glu388 is a binding site for FAD. Arg399 is a binding site for substrate. An FAD-binding site is contributed by 404–405 (SL).

The protein belongs to the FAD-dependent oxidoreductase 2 family. FRD/SDH subfamily. As to quaternary structure, part of an enzyme complex containing four subunits: a flavoprotein, an iron-sulfur, cytochrome b-556, and a hydrophobic anchor protein. Requires FAD as cofactor.

It is found in the cell inner membrane. The catalysed reaction is a quinone + succinate = fumarate + a quinol. Its pathway is carbohydrate metabolism; tricarboxylic acid cycle; fumarate from succinate (bacterial route): step 1/1. Functionally, two distinct, membrane-bound, FAD-containing enzymes are responsible for the catalysis of fumarate and succinate interconversion; the fumarate reductase is used in anaerobic growth, and the succinate dehydrogenase is used in aerobic growth. The protein is Succinate dehydrogenase flavoprotein subunit (sdhA) of Salmonella typhimurium (strain LT2 / SGSC1412 / ATCC 700720).